A 220-amino-acid polypeptide reads, in one-letter code: Redox-sensing transcriptional repressor Rex (220 aa).

Positions 16–55 (MYVQVLETLKREGSQVVSSELLARTCSVNPSQIRKDLAYF) form a DNA-binding region, H-T-H motif. 90–95 (GIGNLG) is an NAD(+) binding site.

It belongs to the transcriptional regulatory Rex family. As to quaternary structure, homodimer.

The protein localises to the cytoplasm. Its function is as follows. Modulates transcription in response to changes in cellular NADH/NAD(+) redox state. This chain is Redox-sensing transcriptional repressor Rex, found in Solidesulfovibrio magneticus (strain ATCC 700980 / DSM 13731 / RS-1) (Desulfovibrio magneticus).